Here is a 124-residue protein sequence, read N- to C-terminus: Basic leucine zipper transcriptional factor ATF-like (124 aa).

Over residues 1-23 (MAQGSDNNDTSYTKSPSPGNKQG) the composition is skewed to polar residues. A disordered region spans residues 1–60 (MAQGSDNNDTSYTKSPSPGNKQGSSDDMRKVMRREKNRIAAQKSRMRQTQKADSLHLESE). The 64-residue stretch at 27-90 (DMRKVMRREK…KYLSTVLSNH (64 aa)) folds into the bZIP domain. The interval 29–51 (RKVMRREKNRIAAQKSRMRQTQK) is basic motif. A leucine-zipper region spans residues 55–83 (LHLESESLEKENAALRKEVKRLTEEAKYL).

It belongs to the bZIP family.

The protein resides in the nucleus. Its subcellular location is the cytoplasm. Functionally, AP-1 family transcription factor that controls the differentiation of lineage-specific cells in the immune system: specifically mediates the differentiation of T-helper 17 cells (Th17), follicular T-helper cells (TfH), CD8(+) dendritic cells and class-switch recombination (CSR) in B-cells. The protein is Basic leucine zipper transcriptional factor ATF-like (batf) of Danio rerio (Zebrafish).